The following is a 69-amino-acid chain: Light-harvesting protein B-870 beta chain (69 aa).

The propeptide occupies 1-2 (MA). Topologically, residues 3–22 (EVKQESLSGITEGEAKEFHK) are cytoplasmic. Residues H21 and H39 each coordinate a bacteriochlorophyll. The helical transmembrane segment at 23-45 (IFTSSILVFFGVAAFAHLLVWIW) threads the bilayer. The Periplasmic segment spans residues 46–56 (RPWVPGPNGYS). Residues 57–69 (ALETLTQTLTYLS) constitute a propeptide that is removed on maturation.

This sequence belongs to the antenna complex beta subunit family. In terms of assembly, the core complex is formed by different alpha and beta chains, binding bacteriochlorophyll molecules, and arranged most probably in tetrameric structures disposed around the reaction center. The non-pigmented gamma chains may constitute additional components.

It is found in the cell inner membrane. In terms of biological role, antenna complexes are light-harvesting systems, which transfer the excitation energy to the reaction centers. The polypeptide is Light-harvesting protein B-870 beta chain (Rhodospirillum rubrum (strain ATCC 11170 / ATH 1.1.1 / DSM 467 / LMG 4362 / NCIMB 8255 / S1)).